Here is a 274-residue protein sequence, read N- to C-terminus: 3-methyl-2-oxobutanoate hydroxymethyltransferase (274 aa).

Mg(2+) contacts are provided by Asp-49 and Asp-88. 3-methyl-2-oxobutanoate-binding positions include 49-50 (DS), Asp-88, and Lys-118. Glu-120 serves as a coordination point for Mg(2+). Residue Glu-187 is the Proton acceptor of the active site.

The protein belongs to the PanB family. Homodecamer; pentamer of dimers. The cofactor is Mg(2+).

It localises to the cytoplasm. The catalysed reaction is 3-methyl-2-oxobutanoate + (6R)-5,10-methylene-5,6,7,8-tetrahydrofolate + H2O = 2-dehydropantoate + (6S)-5,6,7,8-tetrahydrofolate. Its pathway is cofactor biosynthesis; (R)-pantothenate biosynthesis; (R)-pantoate from 3-methyl-2-oxobutanoate: step 1/2. In terms of biological role, catalyzes the reversible reaction in which hydroxymethyl group from 5,10-methylenetetrahydrofolate is transferred onto alpha-ketoisovalerate to form ketopantoate. In Nitrobacter winogradskyi (strain ATCC 25391 / DSM 10237 / CIP 104748 / NCIMB 11846 / Nb-255), this protein is 3-methyl-2-oxobutanoate hydroxymethyltransferase.